The primary structure comprises 295 residues: 4-hydroxy-tetrahydrodipicolinate synthase (295 aa).

Thr-47 provides a ligand contact to pyruvate. The Proton donor/acceptor role is filled by Tyr-135. The active-site Schiff-base intermediate with substrate is Lys-163. Ile-206 contributes to the pyruvate binding site.

The protein belongs to the DapA family. Homodimer.

Its subcellular location is the cytoplasm. It carries out the reaction L-aspartate 4-semialdehyde + pyruvate = (2S,4S)-4-hydroxy-2,3,4,5-tetrahydrodipicolinate + H2O + H(+). It functions in the pathway amino-acid biosynthesis; L-lysine biosynthesis via DAP pathway; (S)-tetrahydrodipicolinate from L-aspartate: step 3/4. Functionally, catalyzes the condensation of (S)-aspartate-beta-semialdehyde [(S)-ASA] and pyruvate to 4-hydroxy-tetrahydrodipicolinate (HTPA). The protein is 4-hydroxy-tetrahydrodipicolinate synthase of Staphylococcus saprophyticus subsp. saprophyticus (strain ATCC 15305 / DSM 20229 / NCIMB 8711 / NCTC 7292 / S-41).